The primary structure comprises 230 residues: Probable nicotinate-nucleotide adenylyltransferase (230 aa).

It belongs to the NadD family.

It carries out the reaction nicotinate beta-D-ribonucleotide + ATP + H(+) = deamido-NAD(+) + diphosphate. It functions in the pathway cofactor biosynthesis; NAD(+) biosynthesis; deamido-NAD(+) from nicotinate D-ribonucleotide: step 1/1. In terms of biological role, catalyzes the reversible adenylation of nicotinate mononucleotide (NaMN) to nicotinic acid adenine dinucleotide (NaAD). This is Probable nicotinate-nucleotide adenylyltransferase from Pseudomonas putida (strain ATCC 47054 / DSM 6125 / CFBP 8728 / NCIMB 11950 / KT2440).